The following is a 456-amino-acid chain: Bifunctional protein GlmU (456 aa).

Residues Met1–Arg229 are pyrophosphorylase. UDP-N-acetyl-alpha-D-glucosamine-binding positions include Leu11–Gly14, Lys25, Gln76, Gly81–Thr82, Tyr103–Asp105, Gly140, Glu154, Asn169, and Asn227. Asp105 is a Mg(2+) binding site. Position 227 (Asn227) interacts with Mg(2+). The interval Leu230–Ser250 is linker. The tract at residues Gly251–Lys456 is N-acetyltransferase. Arg333 and Lys351 together coordinate UDP-N-acetyl-alpha-D-glucosamine. Catalysis depends on His363, which acts as the Proton acceptor. UDP-N-acetyl-alpha-D-glucosamine contacts are provided by Tyr366 and Asn377. Residues Ala380, Asn386–Tyr387, Ser405, Ala423, and Arg440 contribute to the acetyl-CoA site.

This sequence in the N-terminal section; belongs to the N-acetylglucosamine-1-phosphate uridyltransferase family. The protein in the C-terminal section; belongs to the transferase hexapeptide repeat family. In terms of assembly, homotrimer. Mg(2+) is required as a cofactor.

The protein resides in the cytoplasm. It carries out the reaction alpha-D-glucosamine 1-phosphate + acetyl-CoA = N-acetyl-alpha-D-glucosamine 1-phosphate + CoA + H(+). The catalysed reaction is N-acetyl-alpha-D-glucosamine 1-phosphate + UTP + H(+) = UDP-N-acetyl-alpha-D-glucosamine + diphosphate. The protein operates within nucleotide-sugar biosynthesis; UDP-N-acetyl-alpha-D-glucosamine biosynthesis; N-acetyl-alpha-D-glucosamine 1-phosphate from alpha-D-glucosamine 6-phosphate (route II): step 2/2. Its pathway is nucleotide-sugar biosynthesis; UDP-N-acetyl-alpha-D-glucosamine biosynthesis; UDP-N-acetyl-alpha-D-glucosamine from N-acetyl-alpha-D-glucosamine 1-phosphate: step 1/1. It participates in bacterial outer membrane biogenesis; LPS lipid A biosynthesis. Functionally, catalyzes the last two sequential reactions in the de novo biosynthetic pathway for UDP-N-acetylglucosamine (UDP-GlcNAc). The C-terminal domain catalyzes the transfer of acetyl group from acetyl coenzyme A to glucosamine-1-phosphate (GlcN-1-P) to produce N-acetylglucosamine-1-phosphate (GlcNAc-1-P), which is converted into UDP-GlcNAc by the transfer of uridine 5-monophosphate (from uridine 5-triphosphate), a reaction catalyzed by the N-terminal domain. This chain is Bifunctional protein GlmU, found in Salmonella dublin (strain CT_02021853).